Reading from the N-terminus, the 318-residue chain is Thymidylate synthase (318 aa).

Residues R25 and 180 to 181 (RR) contribute to the dUMP site. The active-site Nucleophile is C200. Residues 220–223 (RSGD), N231, and 261–263 (HIY) each bind dUMP. D223 provides a ligand contact to (6R)-5,10-methylene-5,6,7,8-tetrahydrofolate. A317 contacts (6R)-5,10-methylene-5,6,7,8-tetrahydrofolate.

Belongs to the thymidylate synthase family. Bacterial-type ThyA subfamily. As to quaternary structure, homodimer.

The protein resides in the cytoplasm. It carries out the reaction dUMP + (6R)-5,10-methylene-5,6,7,8-tetrahydrofolate = 7,8-dihydrofolate + dTMP. It participates in pyrimidine metabolism; dTTP biosynthesis. In terms of biological role, catalyzes the reductive methylation of 2'-deoxyuridine-5'-monophosphate (dUMP) to 2'-deoxythymidine-5'-monophosphate (dTMP) while utilizing 5,10-methylenetetrahydrofolate (mTHF) as the methyl donor and reductant in the reaction, yielding dihydrofolate (DHF) as a by-product. This enzymatic reaction provides an intracellular de novo source of dTMP, an essential precursor for DNA biosynthesis. The chain is Thymidylate synthase from Bacillus cereus (strain ATCC 14579 / DSM 31 / CCUG 7414 / JCM 2152 / NBRC 15305 / NCIMB 9373 / NCTC 2599 / NRRL B-3711).